The chain runs to 553 residues: Chaperonin GroEL (553 aa).

ATP contacts are provided by residues 30–33, lysine 51, 87–91, glycine 415, and aspartate 495; these read TLGP and DGTTT.

The protein belongs to the chaperonin (HSP60) family. In terms of assembly, forms a cylinder of 14 subunits composed of two heptameric rings stacked back-to-back. Interacts with the co-chaperonin GroES.

It is found in the cytoplasm. It carries out the reaction ATP + H2O + a folded polypeptide = ADP + phosphate + an unfolded polypeptide.. Together with its co-chaperonin GroES, plays an essential role in assisting protein folding. The GroEL-GroES system forms a nano-cage that allows encapsulation of the non-native substrate proteins and provides a physical environment optimized to promote and accelerate protein folding. In Buchnera aphidicola subsp. Tuberolachnus salignus, this protein is Chaperonin GroEL.